A 398-amino-acid polypeptide reads, in one-letter code: Fatty-acid-binding protein 2 (398 aa).

Positions 222, 235, and 302 each coordinate dodecanoate.

This sequence belongs to the chalcone isomerase family. In terms of tissue distribution, expressed in developing cotyledons, young seedlings, roots, seeds, embryos, macrospores, preanthesis and tapetum. Restricted to developing and reproductive tissues.

It is found in the plastid. It localises to the chloroplast stroma. Its function is as follows. Fatty-acid-binding protein. Associates with saturated fatty acid. This chain is Fatty-acid-binding protein 2 (FAP2), found in Arabidopsis thaliana (Mouse-ear cress).